The following is a 281-amino-acid chain: Large ribosomal subunit protein uL2 (281 aa).

The interval 208 to 281 (AGRSRYAGQR…RGRKRGPHTR (74 aa)) is disordered. Residues 254-281 (TVGKKTRSHKARSNKFIVRGRKRGPHTR) are compositionally biased toward basic residues.

Belongs to the universal ribosomal protein uL2 family. In terms of assembly, part of the 50S ribosomal subunit. Forms a bridge to the 30S subunit in the 70S ribosome.

In terms of biological role, one of the primary rRNA binding proteins. Required for association of the 30S and 50S subunits to form the 70S ribosome, for tRNA binding and peptide bond formation. It has been suggested to have peptidyltransferase activity; this is somewhat controversial. Makes several contacts with the 16S rRNA in the 70S ribosome. The protein is Large ribosomal subunit protein uL2 of Limosilactobacillus fermentum (strain NBRC 3956 / LMG 18251) (Lactobacillus fermentum).